Here is a 221-residue protein sequence, read N- to C-terminus: Small ribosomal subunit protein uS3c (221 aa).

Residues 39–109 (LRDYLKTRLA…RVIVHVVEIA (71 aa)) form the KH type-2 domain.

The protein belongs to the universal ribosomal protein uS3 family. As to quaternary structure, part of the 30S ribosomal subunit.

The protein resides in the plastid. It localises to the chloroplast. This chain is Small ribosomal subunit protein uS3c (rps3), found in Nephroselmis olivacea (Green alga).